Consider the following 400-residue polypeptide: Acetate kinase (400 aa).

N10 contributes to the Mg(2+) binding site. ATP is bound at residue K17. A substrate-binding site is contributed by R91. D150 (proton donor/acceptor) is an active-site residue. ATP contacts are provided by residues 210–214 (HLGSG), 285–287 (DCR), and 333–337 (GIGEN). E387 contacts Mg(2+).

It belongs to the acetokinase family. As to quaternary structure, homodimer. Mg(2+) serves as cofactor. Requires Mn(2+) as cofactor.

It localises to the cytoplasm. The enzyme catalyses acetate + ATP = acetyl phosphate + ADP. Its pathway is metabolic intermediate biosynthesis; acetyl-CoA biosynthesis; acetyl-CoA from acetate: step 1/2. Its function is as follows. Catalyzes the formation of acetyl phosphate from acetate and ATP. Can also catalyze the reverse reaction. In Baumannia cicadellinicola subsp. Homalodisca coagulata, this protein is Acetate kinase.